A 594-amino-acid polypeptide reads, in one-letter code: DELLA protein 1 (594 aa).

The interval 1 to 36 (MKREHQESFGGGVISNNNKTNTNHLNSSKNINFGEC) is disordered. Positions 15-30 (SNNNKTNTNHLNSSKN) are enriched in low complexity. The DELLA motif signature appears at 61-65 (DELLA). The GRAS domain maps to 207-587 (VDTQETGVRL…RSLIATSAWK (381 aa)). Residues 214-268 (VRLVHTLMACAEAIQQKNLKLAEALVKHISLLASLQTGAMRKVASYFAQALARRI) are leucine repeat I (LRI). The tract at residues 216-253 (LVHTLMACAEAIQQKNLKLAEALVKHISLLASLQTGAM) is required for possible homodimerization. The LxCxE motif; degenerate motif lies at 221–225 (MACAE). The interval 285-350 (HMHFYESSPY…GGPPTFRLTG (66 aa)) is VHIID. The VHIID motif lies at 316 to 320 (VHVID). Residues 364-396 (QVGWKLAQLAQTIGVQFEFRGFVCNSIADLDPN) are leucine repeat II (LRII). The interval 406 to 508 (VAVNSVFELH…EIYLGKQICN (103 aa)) is PFYRE. Positions 414-418 (LHTML) match the LXXLL motif; degenerate motif. The interval 511-587 (AYEGVDRVER…RSLIATSAWK (77 aa)) is SAW.

The protein belongs to the GRAS family. DELLA subfamily. May be a homodimer. Ubiquitinated. Upon GA application it is ubiquitinated, leading to its subsequent degradation. As to expression, strongly expressed in the vascular tissue and endodermis but barely in the inner cortical cells where arbuscule are formed during arbuscular mycorrhizal (AM) symbiosis.

It localises to the nucleus. Its function is as follows. Probable transcriptional regulator that acts as a repressor of the gibberellin (GA) signaling pathway. Probably acts by participating in large multiprotein complexes that repress transcription of GA-inducible genes. Upon GA application, it is degraded by the proteasome, allowing the GA signaling pathway. Together with DELLA2, required to enable arbuscule development during arbuscular mycorrhizal (AM) symbiosis with AM fungi (e.g. Glomus versiforme) via the regulation of RAM1 which, in turn, regulates various AM genes (e.g. NSP1, NSP2, PT4, LEC5, RAM2, EXO70I, STR and RAD1). The polypeptide is DELLA protein 1 (Medicago truncatula (Barrel medic)).